Reading from the N-terminus, the 480-residue chain is Acetylxylan esterase (480 aa).

Residues 1–19 (MNRKLFMTGLLMLAMTMQA) form the signal peptide.

It belongs to the AB hydrolase superfamily.

It catalyses the reaction Deacetylation of xylans and xylo-oligosaccharides.. The protein operates within glycan degradation; xylan degradation. Its function is as follows. Involved in degradation of plant cell wall polysaccharides. Is an acetyl esterase with broad substrate specificity, releasing acetic acid from acetylated xylo-oligosaccharides and acetylated xylan as well as xylose-tetraacetate, 4-O-methylumbelliferyl acetate, glucose-pentaacetate, and cephalosporin C. Appears to have greater activity on oligosaccharides than on polymeric substrates. Is also able to release acetic acid from xylo-oligosaccharides with 4-O-methylglucuronic acid side groups proximally located to O-acetyl esters. Preferentially targets xylo-oligosaccharides possessing three or more O-acetyl groups, but following their depletion it is active on the less acetylated portion of the substrate. The chain is Acetylxylan esterase from Xylanibacter ruminicola (strain ATCC 19189 / DSM 19721 / CIP 105475 / JCM 8958 / 23) (Prevotella ruminicola).